The chain runs to 133 residues: Small ribosomal subunit protein uS8 (133 aa).

The protein belongs to the universal ribosomal protein uS8 family. Part of the 30S ribosomal subunit. Contacts proteins S5 and S12.

In terms of biological role, one of the primary rRNA binding proteins, it binds directly to 16S rRNA central domain where it helps coordinate assembly of the platform of the 30S subunit. The chain is Small ribosomal subunit protein uS8 from Mycoplasmoides gallisepticum (strain R(low / passage 15 / clone 2)) (Mycoplasma gallisepticum).